A 78-amino-acid chain; its full sequence is Conotoxin ba1890.8 (78 aa).

The first 22 residues, 1–22 (MKTSGRLLFLCLAVGLLLESQA), serve as a signal peptide directing secretion. Positions 23–61 (HPIADAEDATRNVGSDGTSVELSEILERGQDSSAEKGQR) are excised as a propeptide. A disordered region spans residues 25-78 (IADAEDATRNVGSDGTSVELSEILERGQDSSAEKGQRQNDHDVDESGHDIPFPS). The span at 34–43 (NVGSDGTSVE) shows a compositional bias: polar residues. Positions 47-72 (ILERGQDSSAEKGQRQNDHDVDESGH) are enriched in basic and acidic residues. A Pyrrolidone carboxylic acid modification is found at Gln62.

The protein belongs to the conotoxin H superfamily. Expressed by the venom duct.

The protein resides in the secreted. In terms of biological role, probable toxin. The polypeptide is Conotoxin ba1890.8 (Conus bayani (Bayan's cone)).